The following is a 250-amino-acid chain: MNICLIDETGAGDGALSVLAARWGLTHDADNPMALVMTSARLELRKRDEPKLGGIFVDFVEGAMAHRRKFGGGRGEAVAKAVGIKGSYLPQVVDATAGLGRDAFVLASVGCHVRMLERNPVVAALLDDGLARGYQDAEIGPWLRERLQLIHASSLTALEAITPRPDVVYLDPMFPHKQKSALVKKEMRVFQSLVGPDLDADGLLAPARRLAIKRVVVKRPDYAPPLGDVATPNAVVTKGHRFDIYTGTPA.

S-adenosyl-L-methionine contacts are provided by residues 101-102 (RD), 117-118 (ER), 153-154 (SS), and aspartate 171.

Belongs to the methyltransferase superfamily. RsmJ family.

Its subcellular location is the cytoplasm. It carries out the reaction guanosine(1516) in 16S rRNA + S-adenosyl-L-methionine = N(2)-methylguanosine(1516) in 16S rRNA + S-adenosyl-L-homocysteine + H(+). Specifically methylates the guanosine in position 1516 of 16S rRNA. In Cronobacter sakazakii (strain ATCC BAA-894) (Enterobacter sakazakii), this protein is Ribosomal RNA small subunit methyltransferase J.